Here is a 73-residue protein sequence, read N- to C-terminus: MKFAFAIFVVLAILHTELISATEYKCKVTGTGDMTIPFGCKDGNDVQGCKKLCQEKCKYTTTRQSCVGKKCYC.

The first 21 residues, 1-21 (MKFAFAIFVVLAILHTELISA), serve as a signal peptide directing secretion.

The protein resides in the secreted. Its function is as follows. Salivary protein that inhibits host voltage-gated potassium channels Kv1.1/KCNA1, Kv1.2/KCNA2 and Kv1.3/KCNA3 likely via a voltage-independent pore-blocking mechanism. Suppresses expression of the Kv1.3/KCNA3 channel in lipopolysaccharide (LPS)-stimulated mouse macrophages and human T-cells. Down-regulates secretion of nitric oxide (NO) and inflammatory cytokines, such as TNF-alpha/TNF, IL-1beta/IL1B and IL6, in LPS-stimulated mouse macrophages in a manner dependent on Kv1.3/KCNA3 channel blockage. Reduces activation of MAPK and NF-kappa-B signaling pathways in LPS-stimulated mouse macrophages. Modulates intracellular Ca(2+) signaling in human PMA/ionomycin-triggered T-cells. Interferes with the activation of the MAPK, NF-kappa-B and NFATc1 pathways in human PMA/ionomycin-triggered T-cells. Reduces proliferation of human PMA/ionomycin-triggered T-cells. Down-regulates secretion of cytokines, such as TNF-alpha/TNF and IL2, in human PMA/ionomycin-triggered T-cells. This chain is Salivary protein FS48, found in Xenopsylla cheopis (Oriental rat flea).